The sequence spans 203 residues: Small ribosomal subunit protein uS4c (203 aa).

The S4 RNA-binding domain occupies 91 to 159 (MRLDNIIFRL…ISKNIEFYQK (69 aa)).

The protein belongs to the universal ribosomal protein uS4 family. As to quaternary structure, part of the 30S ribosomal subunit. Contacts protein S5. The interaction surface between S4 and S5 is involved in control of translational fidelity.

It is found in the plastid. It localises to the chloroplast. Functionally, one of the primary rRNA binding proteins, it binds directly to 16S rRNA where it nucleates assembly of the body of the 30S subunit. With S5 and S12 plays an important role in translational accuracy. The sequence is that of Small ribosomal subunit protein uS4c (rps4) from Lopidium concinnum (Moss).